Consider the following 120-residue polypeptide: FK506-binding protein 1B (120 aa).

Residues 1–26 (MGLEKQTLRMGNGKDHPQPGDPVELN) are disordered. Residues 20-115 (GDPVELNYTG…VFEVELLKIK (96 aa)) form the PPIase FKBP-type domain.

The protein belongs to the FKBP-type PPIase family. FKBP1 subfamily.

The catalysed reaction is [protein]-peptidylproline (omega=180) = [protein]-peptidylproline (omega=0). With respect to regulation, inhibited by both FK506 and rapamycin. Its function is as follows. PPIases accelerate the folding of proteins. It catalyzes the cis-trans isomerization of proline imidic peptide bonds in oligopeptides. The chain is FK506-binding protein 1B (fpr1B) from Aspergillus fumigatus (strain ATCC MYA-4609 / CBS 101355 / FGSC A1100 / Af293) (Neosartorya fumigata).